Reading from the N-terminus, the 441-residue chain is Ribulose bisphosphate carboxylase large chain (441 aa).

An N6,N6,N6-trimethyllysine modification is found at Lys5. 2 residues coordinate substrate: Asn114 and Thr164. Lys166 serves as the catalytic Proton acceptor. A substrate-binding site is contributed by Lys168. Lys192, Asp194, and Glu195 together coordinate Mg(2+). Residue Lys192 is modified to N6-carboxylysine. Residue His285 is the Proton acceptor of the active site. Substrate-binding residues include Arg286, His318, and Ser370.

This sequence belongs to the RuBisCO large chain family. Type I subfamily. As to quaternary structure, heterohexadecamer of 8 large chains and 8 small chains; disulfide-linked. The disulfide link is formed within the large subunit homodimers. Mg(2+) serves as cofactor. In terms of processing, the disulfide bond which can form in the large chain dimeric partners within the hexadecamer appears to be associated with oxidative stress and protein turnover.

The protein localises to the plastid. Its subcellular location is the chloroplast. It catalyses the reaction 2 (2R)-3-phosphoglycerate + 2 H(+) = D-ribulose 1,5-bisphosphate + CO2 + H2O. The catalysed reaction is D-ribulose 1,5-bisphosphate + O2 = 2-phosphoglycolate + (2R)-3-phosphoglycerate + 2 H(+). Functionally, ruBisCO catalyzes two reactions: the carboxylation of D-ribulose 1,5-bisphosphate, the primary event in carbon dioxide fixation, as well as the oxidative fragmentation of the pentose substrate in the photorespiration process. Both reactions occur simultaneously and in competition at the same active site. The sequence is that of Ribulose bisphosphate carboxylase large chain from Argyrochosma delicatula (Delicate cloak fern).